The chain runs to 298 residues: NADH-cytochrome b5 reductase 2 (298 aa).

A helical transmembrane segment spans residues 13–33 (FLPFAIGAVAVTAGALYLNGW). Positions 48 to 152 (RKWIDLELEK…QGPIPKWQWK (105 aa)) constitute an FAD-binding FR-type domain. 155-190 (SFDTITLLGGGTGITPLYQLVHHITQNKEDKTKINL) serves as a coordination point for FAD.

This sequence belongs to the flavoprotein pyridine nucleotide cytochrome reductase family. The cofactor is FAD.

It localises to the mitochondrion outer membrane. The catalysed reaction is 2 Fe(III)-[cytochrome b5] + NADH = 2 Fe(II)-[cytochrome b5] + NAD(+) + H(+). In terms of biological role, may mediate the reduction of outer membrane cytochrome b5. The sequence is that of NADH-cytochrome b5 reductase 2 (MCR1) from Candida glabrata (strain ATCC 2001 / BCRC 20586 / JCM 3761 / NBRC 0622 / NRRL Y-65 / CBS 138) (Yeast).